Here is a 146-residue protein sequence, read N- to C-terminus: Mitochondrial DnaJ homolog 2 (146 aa).

The J domain maps to 85 to 146 (EALLILDISA…LERSVLLRKR (62 aa)).

As to quaternary structure, interacts with PAM16/TIM16 and is recruited by the PAM complex.

The protein localises to the mitochondrion inner membrane. In terms of biological role, plays a role in mitochondrial biogenesis and protein folding. Participates in the translocation of transit peptide-containing proteins from the inner membrane into the mitochondrial matrix in an ATP-dependent manner, probably by stimulating activity of mtHSP70 (SSC1). The polypeptide is Mitochondrial DnaJ homolog 2 (MDJ2) (Saccharomyces cerevisiae (strain ATCC 204508 / S288c) (Baker's yeast)).